The chain runs to 154 residues: 6,7-dimethyl-8-ribityllumazine synthase (154 aa).

5-amino-6-(D-ribitylamino)uracil-binding positions include Phe23, Ala57 to Glu59, and Ala81 to Ile83. Ser86–Thr87 contacts (2S)-2-hydroxy-3-oxobutyl phosphate. Residue His89 is the Proton donor of the active site. Residue Phe114 participates in 5-amino-6-(D-ribitylamino)uracil binding. Arg128 is a (2S)-2-hydroxy-3-oxobutyl phosphate binding site.

The protein belongs to the DMRL synthase family.

It carries out the reaction (2S)-2-hydroxy-3-oxobutyl phosphate + 5-amino-6-(D-ribitylamino)uracil = 6,7-dimethyl-8-(1-D-ribityl)lumazine + phosphate + 2 H2O + H(+). Its pathway is cofactor biosynthesis; riboflavin biosynthesis; riboflavin from 2-hydroxy-3-oxobutyl phosphate and 5-amino-6-(D-ribitylamino)uracil: step 1/2. Its function is as follows. Catalyzes the formation of 6,7-dimethyl-8-ribityllumazine by condensation of 5-amino-6-(D-ribitylamino)uracil with 3,4-dihydroxy-2-butanone 4-phosphate. This is the penultimate step in the biosynthesis of riboflavin. The chain is 6,7-dimethyl-8-ribityllumazine synthase from Syntrophotalea carbinolica (strain DSM 2380 / NBRC 103641 / GraBd1) (Pelobacter carbinolicus).